Here is a 260-residue protein sequence, read N- to C-terminus: MVKKNTFFANKNLGQNFLVDSEVINRIINVINPKSHDFMIEIGPGLGALTYPICKILHKLFVIEHDNNLGTRLLKDISNIEVFVEDVLKFNFLNLINNSFKSVRIIGNLPYNISIPILFYLFKFHNNIIDMNFMFQKEVASKLLAIPGTKSYSRLSIIAQYYCDIDFLFDVVAQSFYPIPKVTSSFVRLVPRKVFNLYVRDINQLSNVTALAFQQRRKIVKNSLSSLFNDDALRKLGIDPLLRAENLSVKQYCLLSNHVC.

Positions 16, 18, 43, 64, 86, and 108 each coordinate S-adenosyl-L-methionine.

It belongs to the class I-like SAM-binding methyltransferase superfamily. rRNA adenine N(6)-methyltransferase family. RsmA subfamily.

The protein localises to the cytoplasm. The enzyme catalyses adenosine(1518)/adenosine(1519) in 16S rRNA + 4 S-adenosyl-L-methionine = N(6)-dimethyladenosine(1518)/N(6)-dimethyladenosine(1519) in 16S rRNA + 4 S-adenosyl-L-homocysteine + 4 H(+). In terms of biological role, specifically dimethylates two adjacent adenosines (A1518 and A1519) in the loop of a conserved hairpin near the 3'-end of 16S rRNA in the 30S particle. May play a critical role in biogenesis of 30S subunits. This Buchnera aphidicola subsp. Baizongia pistaciae (strain Bp) protein is Ribosomal RNA small subunit methyltransferase A.